We begin with the raw amino-acid sequence, 379 residues long: Alcohol dehydrogenase 3 (379 aa).

Positions 47, 49, 69, 99, 102, 105, 113, and 177 each coordinate Zn(2+). Residues Thr-49 and His-69 each contribute to the an alcohol site. Thr-49 lines the NAD(+) pocket. Residues 202–207 (GLGAVG), Asp-226, Lys-231, Thr-272, Val-295, 295–297 (VGV), Phe-322, and Arg-372 each bind NAD(+).

It belongs to the zinc-containing alcohol dehydrogenase family. In terms of assembly, homodimer. It depends on Zn(2+) as a cofactor.

Its subcellular location is the cytoplasm. The enzyme catalyses a primary alcohol + NAD(+) = an aldehyde + NADH + H(+). It carries out the reaction a secondary alcohol + NAD(+) = a ketone + NADH + H(+). The chain is Alcohol dehydrogenase 3 (ADH3) from Hordeum vulgare (Barley).